We begin with the raw amino-acid sequence, 509 residues long: ATP synthase subunit alpha (509 aa).

169 to 176 contributes to the ATP binding site; it reads GDRQTGKT.

This sequence belongs to the ATPase alpha/beta chains family. In terms of assembly, F-type ATPases have 2 components, CF(1) - the catalytic core - and CF(0) - the membrane proton channel. CF(1) has five subunits: alpha(3), beta(3), gamma(1), delta(1), epsilon(1). CF(0) has three main subunits: a(1), b(2) and c(9-12). The alpha and beta chains form an alternating ring which encloses part of the gamma chain. CF(1) is attached to CF(0) by a central stalk formed by the gamma and epsilon chains, while a peripheral stalk is formed by the delta and b chains.

Its subcellular location is the cell inner membrane. The enzyme catalyses ATP + H2O + 4 H(+)(in) = ADP + phosphate + 5 H(+)(out). Produces ATP from ADP in the presence of a proton gradient across the membrane. The alpha chain is a regulatory subunit. The polypeptide is ATP synthase subunit alpha (Brucella suis biovar 1 (strain 1330)).